The following is a 969-amino-acid chain: Leucine--tRNA ligase (969 aa).

The 'HIGH' region signature appears at 78-89; that stretch reads PYPSGEGLHVGH. Positions 739 to 743 match the 'KMSKS' region motif; sequence KIGKS. Lys742 is a binding site for ATP.

Belongs to the class-I aminoacyl-tRNA synthetase family.

Its subcellular location is the cytoplasm. The enzyme catalyses tRNA(Leu) + L-leucine + ATP = L-leucyl-tRNA(Leu) + AMP + diphosphate. The chain is Leucine--tRNA ligase from Mycobacterium tuberculosis (strain ATCC 25177 / H37Ra).